A 363-amino-acid polypeptide reads, in one-letter code: Regulator of G-protein signaling rgs-3 (363 aa).

The segment at 1–70 is disordered; it reads MWRSYKAETP…NSSATSPTPS (70 aa). Residues 21–35 show a composition bias toward basic and acidic residues; it reads LNLHDSSESDHEGRQ. Composition is skewed to low complexity over residues 36–50 and 58–70; these read SRSA…APAS and PITN…PTPS. 2 RGS domains span residues 112 to 225 and 240 to 359; these read NCAN…LEYL and SFEG…IDLL.

May be phosphorylated and activated by egl-4.

Its function is as follows. Modulates chemotaxis responses by regulating positively the sensitivity to CO2 levels in BAG neurons and by regulating negatively the sensitivity to quinine in ASH sensory neurons. In Caenorhabditis elegans, this protein is Regulator of G-protein signaling rgs-3 (rgs-3).